The chain runs to 157 residues: Acetyltransferase PseH (157 aa).

The N-acetyltransferase domain maps to 5–152; the sequence is KNFAELNSQE…YYVCLKQSHC (148 aa).

Catalyzes the third step in the biosynthesis of pseudaminic acid, a sialic-acid-like sugar that is used to modify flagellin. Mediates N-4 acetylation of UDP-4-amino-4,6-dideoxy-beta-L-AltNAc to form UDP-2,4-diacetamido-2,4,6-trideoxy-beta-L-altropyranose. The polypeptide is Acetyltransferase PseH (pseH) (Campylobacter jejuni subsp. jejuni serotype O:2 (strain ATCC 700819 / NCTC 11168)).